We begin with the raw amino-acid sequence, 414 residues long: MFDTVCTLPLSADLFSQALHPKEPIVSVGLSTGHVQTFRLPSEESDTDGDGAESTSSSRNGKGHIDTMWRTRRHKGSCRCLGFGVDGEMLYSAGTDGLVKAAKAETGVVENKIAIPPAKDGSVDAPTIVHALSPQTLLLATDSSALHLYDLRIPFSPVSARPQQTHHPHDDYISSLTPLPPSDTSTSGFSKQWVTTGGTTLAVTDLRRGVLVRSEDQEEELVSSVYIGGLRASGTSRGEKVVVGGSSGVLTLWEKGAWDDQDERIYVQREAGGGESLETLAVVPDELGKGKMIAVGLGSGGVKFVRMGMNKVVSEVMHDETEGVIGLGFDVEGRMVSGGGQVVKVWHEAVDSDGMDGDMAGGKRMFGSDSDDSDDGDDSDDSDRESRKAAQPQRKKKKNKGKGGQDIMGFADID.

WD repeat units lie at residues 9 to 48 (PLSA…SDTD), 73 to 112 (RHKG…VENK), 118 to 159 (AKDG…SPVS), 222 to 263 (VSSV…DQDE), and 319 to 356 (DETE…DGMD). A disordered region spans residues 39–65 (RLPSEESDTDGDGAESTSSSRNGKGHI). The tract at residues 352–414 (SDGMDGDMAG…QDIMGFADID (63 aa)) is disordered. Acidic residues predominate over residues 369 to 383 (DSDDSDDGDDSDDSD).

It belongs to the WD repeat WDR55 family.

It localises to the nucleus. The protein resides in the nucleolus. In Neosartorya fischeri (strain ATCC 1020 / DSM 3700 / CBS 544.65 / FGSC A1164 / JCM 1740 / NRRL 181 / WB 181) (Aspergillus fischerianus), this protein is WD repeat-containing protein jip5 (jip5).